The sequence spans 164 residues: MTIAIYAGSFDPVTNGHIDVLKGALRLADQVIVAIGMHPGKKPLFSFDERVALIEASAKAVLHKDAARVSVIAFDGLVIDAARKHGAQLMVRGLRDGTDLDYEMQMAGMNGTMAPELQTVFLPADPAVRTITATLVRQIASMGGDIKPFVPVPVAAALNTKFKS.

Residue Ser9 participates in substrate binding. ATP contacts are provided by residues 9-10 (SF) and His17. Substrate is bound by residues Lys41, Val78, and Arg92. ATP-binding positions include 93–95 (GLR), Glu103, and 128–134 (VRTITAT).

This sequence belongs to the bacterial CoaD family. In terms of assembly, homohexamer. It depends on Mg(2+) as a cofactor.

Its subcellular location is the cytoplasm. The catalysed reaction is (R)-4'-phosphopantetheine + ATP + H(+) = 3'-dephospho-CoA + diphosphate. It participates in cofactor biosynthesis; coenzyme A biosynthesis; CoA from (R)-pantothenate: step 4/5. In terms of biological role, reversibly transfers an adenylyl group from ATP to 4'-phosphopantetheine, yielding dephospho-CoA (dPCoA) and pyrophosphate. This Brucella suis (strain ATCC 23445 / NCTC 10510) protein is Phosphopantetheine adenylyltransferase.